A 252-amino-acid polypeptide reads, in one-letter code: Demethylmenaquinone methyltransferase (252 aa).

S-adenosyl-L-methionine-binding positions include Thr64, Asp85, and 112 to 113 (NA).

It belongs to the class I-like SAM-binding methyltransferase superfamily. MenG/UbiE family.

The catalysed reaction is a 2-demethylmenaquinol + S-adenosyl-L-methionine = a menaquinol + S-adenosyl-L-homocysteine + H(+). Its pathway is quinol/quinone metabolism; menaquinone biosynthesis; menaquinol from 1,4-dihydroxy-2-naphthoate: step 2/2. Methyltransferase required for the conversion of demethylmenaquinol (DMKH2) to menaquinol (MKH2). The polypeptide is Demethylmenaquinone methyltransferase (Lactococcus lactis subsp. lactis (strain IL1403) (Streptococcus lactis)).